The chain runs to 93 residues: Phosphoribosyl-ATP pyrophosphatase (93 aa).

It belongs to the PRA-PH family.

It localises to the cytoplasm. The enzyme catalyses 1-(5-phospho-beta-D-ribosyl)-ATP + H2O = 1-(5-phospho-beta-D-ribosyl)-5'-AMP + diphosphate + H(+). It functions in the pathway amino-acid biosynthesis; L-histidine biosynthesis; L-histidine from 5-phospho-alpha-D-ribose 1-diphosphate: step 2/9. This is Phosphoribosyl-ATP pyrophosphatase from Corynebacterium aurimucosum (strain ATCC 700975 / DSM 44827 / CIP 107346 / CN-1) (Corynebacterium nigricans).